Reading from the N-terminus, the 282-residue chain is Formamidopyrimidine-DNA glycosylase (282 aa).

The active-site Schiff-base intermediate with DNA is Pro2. Glu3 (proton donor) is an active-site residue. Catalysis depends on Lys60, which acts as the Proton donor; for beta-elimination activity. His99, Arg118, and Lys163 together coordinate DNA. The segment at Leu248 to Lys282 adopts an FPG-type zinc-finger fold. Arg272 functions as the Proton donor; for delta-elimination activity in the catalytic mechanism.

Belongs to the FPG family. In terms of assembly, monomer. It depends on Zn(2+) as a cofactor.

It carries out the reaction Hydrolysis of DNA containing ring-opened 7-methylguanine residues, releasing 2,6-diamino-4-hydroxy-5-(N-methyl)formamidopyrimidine.. The catalysed reaction is 2'-deoxyribonucleotide-(2'-deoxyribose 5'-phosphate)-2'-deoxyribonucleotide-DNA = a 3'-end 2'-deoxyribonucleotide-(2,3-dehydro-2,3-deoxyribose 5'-phosphate)-DNA + a 5'-end 5'-phospho-2'-deoxyribonucleoside-DNA + H(+). In terms of biological role, involved in base excision repair of DNA damaged by oxidation or by mutagenic agents. Acts as a DNA glycosylase that recognizes and removes damaged bases. Has a preference for oxidized purines, such as 7,8-dihydro-8-oxoguanine (8-oxoG). Has AP (apurinic/apyrimidinic) lyase activity and introduces nicks in the DNA strand. Cleaves the DNA backbone by beta-delta elimination to generate a single-strand break at the site of the removed base with both 3'- and 5'-phosphates. This is Formamidopyrimidine-DNA glycosylase from Prochlorococcus marinus (strain NATL1A).